The primary structure comprises 210 residues: Small ribosomal subunit protein uS7 (210 aa).

The protein belongs to the universal ribosomal protein uS7 family.

This Podocoryna carnea (Hydrozoan) protein is Small ribosomal subunit protein uS7 (RPS5).